The chain runs to 497 residues: Ectonucleoside triphosphate diphosphohydrolase 8 (497 aa).

Over 1–8 the chain is Cytoplasmic; that stretch reads MGLSWKER. A helical membrane pass occupies residues 9–29; that stretch reads VFMALLGVAAASGLTMLVLIL. The Extracellular segment spans residues 30–473; the sequence is VKAINVLLPA…AQSYSIWTAG (444 aa). Cys78 and Cys102 form a disulfide bridge. Glu168 serves as the catalytic Proton acceptor. Cys245 and Cys294 are joined by a disulfide. Asn306 is a glycosylation site (N-linked (GlcNAc...) asparagine). Residues Cys331 and Cys337 are joined by a disulfide bond. Asn365 carries an N-linked (GlcNAc...) asparagine glycan. Cys383 and Cys405 are oxidised to a cystine. The chain crosses the membrane as a helical span at residues 474-494; it reads VVFAVLTLVAILGAAAIQIFW. Over 495–497 the chain is Cytoplasmic; sequence TQD.

The protein belongs to the GDA1/CD39 NTPase family. Ca(2+) is required as a cofactor. Requires Mg(2+) as cofactor. N-glycosylated. As to expression, expressed in liver, jejunum and kidney.

It localises to the cell membrane. It catalyses the reaction a ribonucleoside 5'-triphosphate + 2 H2O = a ribonucleoside 5'-phosphate + 2 phosphate + 2 H(+). Canalicular ectonucleoside NTPDase responsible for the main hepatic NTPDase activity. Ectonucleoside NTPDases catalyze the hydrolysis of gamma- and beta-phosphate residues of nucleotides, playing a central role in concentration of extracellular nucleotides. Has activity toward ATP, ADP, UTP and UDP, but not toward AMP. This is Ectonucleoside triphosphate diphosphohydrolase 8 (Entpd8) from Mus musculus (Mouse).